A 210-amino-acid polypeptide reads, in one-letter code: Protein-L-isoaspartate O-methyltransferase (210 aa).

S60 is an active-site residue.

It belongs to the methyltransferase superfamily. L-isoaspartyl/D-aspartyl protein methyltransferase family.

Its subcellular location is the cytoplasm. The catalysed reaction is [protein]-L-isoaspartate + S-adenosyl-L-methionine = [protein]-L-isoaspartate alpha-methyl ester + S-adenosyl-L-homocysteine. Catalyzes the methyl esterification of L-isoaspartyl residues in peptides and proteins that result from spontaneous decomposition of normal L-aspartyl and L-asparaginyl residues. It plays a role in the repair and/or degradation of damaged proteins. The polypeptide is Protein-L-isoaspartate O-methyltransferase (Xylella fastidiosa (strain M12)).